Here is a 574-residue protein sequence, read N- to C-terminus: M-phase inducer phosphatase 2 (574 aa).

2 disordered regions span residues 31 to 51 (GFGF…SSSP) and 90 to 110 (RRTS…AGLC). Ser42 carries the phosphoserine modification. Residues 90–105 (RRTSECSLSSESSESS) are compositionally biased toward low complexity. At Ser166 the chain carries Phosphoserine; by MELK. A Phosphoserine modification is found at Ser246. Ser319 bears the Phosphoserine; by MAPKAPK2 and MELK mark. Phosphoserine; by MELK and MAPK14 is present on Ser319. Residues 339-359 (DVPVLSKRRKSGTPLEEQQLE) are disordered. Phosphoserine; by AURKA is present on Ser349. The residue at position 370 (Ser370) is a Phosphoserine; by BRSK1 and MAPK14. The region spanning 425 to 532 (IVEKFVIVDC…FFPQHPNFCE (108 aa)) is the Rhodanese domain. Residue Cys481 is part of the active site. Ser557 bears the Phosphoserine mark.

Belongs to the MPI phosphatase family. In terms of assembly, interacts with MAPK14 and 14-3-3 proteins. In terms of processing, phosphorylated by BRSK1 in vitro. Phosphorylated by CHEK1, which inhibits the activity of this protein. Phosphorylation at Ser-349 by AURKA might locally participate in the control of the onset of mitosis. Phosphorylation by MELK at Ser-166 promotes localization to the centrosome and the spindle poles during mitosis. Phosphorylation at Ser-319 and Ser-370 by MAPK14 is required for binding to 14-3-3 proteins.

The protein resides in the cytoplasm. The protein localises to the cytoskeleton. It is found in the microtubule organizing center. Its subcellular location is the centrosome. It localises to the spindle pole. It catalyses the reaction O-phospho-L-tyrosyl-[protein] + H2O = L-tyrosyl-[protein] + phosphate. Stimulated by B-type cyclins. Its function is as follows. Tyrosine protein phosphatase which functions as a dosage-dependent inducer of mitotic progression. Directly dephosphorylates CDK1 and stimulates its kinase activity. Required for G2/M phases of the cell cycle progression and abscission during cytokinesis in a ECT2-dependent manner. The three isoforms seem to have a different level of activity. The protein is M-phase inducer phosphatase 2 (Cdc25b) of Rattus norvegicus (Rat).